Reading from the N-terminus, the 279-residue chain is Large ribosomal subunit protein uL2 (279 aa).

Disordered stretches follow at residues 33–58 (LLAPLPKKGGRNAHGRITTRHQGGGH) and 223–279 (GVAM…RKRG). Basic residues-rich tracts occupy residues 40–58 (KGGRNAHGRITTRHQGGGH) and 269–279 (VRRRYATRKRG).

This sequence belongs to the universal ribosomal protein uL2 family. In terms of assembly, part of the 50S ribosomal subunit. Forms a bridge to the 30S subunit in the 70S ribosome.

Functionally, one of the primary rRNA binding proteins. Required for association of the 30S and 50S subunits to form the 70S ribosome, for tRNA binding and peptide bond formation. It has been suggested to have peptidyltransferase activity; this is somewhat controversial. Makes several contacts with the 16S rRNA in the 70S ribosome. This Salinispora arenicola (strain CNS-205) protein is Large ribosomal subunit protein uL2.